Consider the following 45-residue polypeptide: Toxin Bcs III 15.09 (45 aa).

Residues 2 to 44 (QGTACTGEHAHNFCLNGGTCRHIQSLGEYYCICPEGYTGHRCE) enclose the EGF-like domain. 3 disulfides stabilise this stretch: C6/C21, C15/C32, and C34/C43.

The protein localises to the secreted. Its subcellular location is the nematocyst. Has both toxic and EGF activity. The chain is Toxin Bcs III 15.09 from Bunodosoma caissarum (Sea anemone).